A 385-amino-acid chain; its full sequence is Trans-enoyl reductase poxH (385 aa).

64 to 67 (QPYS) lines the NADP(+) pocket. 156–163 (PDPAAPPI) contacts substrate. Residues 199–202 (STSV), 223–226 (SGTD), Tyr-241, and 289–290 (LG) each bind NADP(+). 309–313 (HMAPL) is a binding site for substrate. Residue 372–373 (KR) coordinates NADP(+).

Belongs to the zinc-containing alcohol dehydrogenase family. Monomer.

It participates in secondary metabolite biosynthesis. In terms of biological role, trans-enoyl reductase; part of the gene cluster that mediates the biosynthesis of oxaleimides, cytotoxic compounds containing an unusual disubstituted succinimide moiety. The first step of the pathway is provided by the HR-PKS poxF that serves in a new mode of collaborative biosynthesis with the PKS-NRPS poxE, by providing the olefin containing amino acid substrate via the synthesis of an ACP-bound dec-4-enoate. The cytochrome P450 monooxygenase poxM-catalyzed oxidation at the alpha-position creates the enzyme-bound 2-hydroxydec-4-enoyl-ACP thioester, which may be prone to spontaneous hydrolysis to yield 2-hydroxydec-4-enoic acid due to increased electrophilicity of the carbonyl. 2-hydroxydec-4-enoic acid can then be further oxidized by poxM to yield the alpha-ketoacid 2-oxodec-4-enoicacid, which is reductively aminated by the aminotransferase poxL to yield (S,E)-2-aminodec-4-enoic acid. The Hybrid PKS-NRPS synthetase poxE then performs condensation between the octaketide product of its PKS modules and the amino group of (S,E)-2-aminodec-4-enoic acid which is activated and incorporated by the adenylation domain. The resulting aminoacyl product can be cyclized by the Diels-Alderase PoxQ and reductively released by the reductive (R) domain of poxE to yield an aldehyde intermediate. The released aldehyde is then substrate for a Knoevenagel condensation by the hydrolyase poxO followed by an oxidation at the 5-position of the pyrrolidone ring. The presence of the olefin from the amino acid building block allows for migration of the substituted allyl group to occur. This allylic transposition reaction takes place in a conjugate addition, semipinacol-like fashion to yield a succinimide intermediate. Iterative two-electron oxidations of the C7 methyl of the succinimide intermediate to the carboxylic acid can be catalyzed by one of two remaining cytochrome P450 monooxygenasess poxC or poxD to yield oxaleimide A. Subsequent oxidation yields the maleimide scaffold oxaleimide I. Both oxaleimide A and oxaleimide I can undergo oxidative modifications in the decalin ring to yield the series of products oxaleimides B to H. The sequence is that of Trans-enoyl reductase poxH from Penicillium oxalicum (strain 114-2 / CGMCC 5302) (Penicillium decumbens).